Consider the following 380-residue polypeptide: Protein GOLM2 (380 aa).

The residue at position 1 (M1) is an N-acetylmethionine. Residues 1 to 14 (MVGFGANRRAGRLP) are Cytoplasmic-facing. A helical; Signal-anchor for type II membrane protein transmembrane segment spans residues 15-35 (SLVLAVLLVVIAVLAFNYWSI). Residues 35 to 195 (ISSRHVLLQE…QFLQEQKQEA (161 aa)) adopt a coiled-coil conformation. Topologically, residues 36–380 (SSRHVLLQEE…YGKQRFNDAL (345 aa)) are lumenal. 2 stretches are compositionally biased toward basic and acidic residues: residues 192–212 (KQEAHKFESKGGNELDTDNHA) and 227–247 (KNEEPSSHHIPHGKEQIKRGG). Residues 192–254 (KQEAHKFESK…RGGDAGMPGI (63 aa)) are disordered. S233 and S275 each carry phosphoserine. Positions 280-380 (ESHQVISHLP…YGKQRFNDAL (101 aa)) are disordered. Residues 305–321 (NHNGNSRTSKQNPSNPL) show a composition bias toward polar residues. Residues 344–380 (ATKDRAGDFHKLKQNDEERELQMDPADYGKQRFNDAL) show a composition bias toward basic and acidic residues.

The protein belongs to the GOLM family.

It is found in the membrane. The protein is Protein GOLM2 (GOLM2) of Bos taurus (Bovine).